A 170-amino-acid polypeptide reads, in one-letter code: Shikimate kinase (170 aa).

11–16 lines the ATP pocket; that stretch reads LSGKST. Mg(2+) is bound at residue Ser15. Positions 33, 57, and 79 each coordinate substrate. Arg119 is an ATP binding site. Residue Arg137 participates in substrate binding.

Belongs to the shikimate kinase family. As to quaternary structure, monomer. Requires Mg(2+) as cofactor.

It is found in the cytoplasm. It catalyses the reaction shikimate + ATP = 3-phosphoshikimate + ADP + H(+). The protein operates within metabolic intermediate biosynthesis; chorismate biosynthesis; chorismate from D-erythrose 4-phosphate and phosphoenolpyruvate: step 5/7. Catalyzes the specific phosphorylation of the 3-hydroxyl group of shikimic acid using ATP as a cosubstrate. The sequence is that of Shikimate kinase from Clostridium botulinum (strain Langeland / NCTC 10281 / Type F).